A 561-amino-acid polypeptide reads, in one-letter code: MRLWKSMAWGILLWHSQSGALCPAWPPARAAEEITRLQQQLADWNDIYWKQGVSAVDDSVYDQLSARLVQWQRCVGQDVSSTPVSPPLNGTTMHPVAHTGVRKLADRQAVEQWMRGRSELWVQPKVDGVAVTLVYQNGKLTRAISRGNGLQGEDWTPKIRLIPSIPQTTQGALANAVLQGEIFLQREGHIQQRMGGMNARSKAAGMLMRQDNASALNSLGIFIWAWPDGPANMPERLSQLAKAGFSLTKKYSLAVKDASEVERARQSWLTSALPFVTDGVVIRMAKEPASQYWRPGQGDWLAAWKYPPVAQVAQVSAIQFSVGKSGKITVVASLVPVILDDKRVQRVNIGSVKRWEAWDIAPGDQILVSLAGQGIPRLDEVVWRSRERSKPVPPDSHFNSLTCFYASETCQEQFISRLVWLGSRSALGLDGMGEASWRALHQTHRFEHIFSWLALTSAQIANTPGFAKGKSEQIWRQFNLARRQPFTRWIMAMDIPLTQAALQASGDRSWEQLLMRTEQHWRQLPATGERRAGRVIDWRDNPQIKTLSRWLAAQHIPGFGS.

K125 (N6-AMP-lysine intermediate) is an active-site residue.

Belongs to the NAD-dependent DNA ligase family. LigB subfamily.

It carries out the reaction NAD(+) + (deoxyribonucleotide)n-3'-hydroxyl + 5'-phospho-(deoxyribonucleotide)m = (deoxyribonucleotide)n+m + AMP + beta-nicotinamide D-nucleotide.. Catalyzes the formation of phosphodiester linkages between 5'-phosphoryl and 3'-hydroxyl groups in double-stranded DNA using NAD as a coenzyme and as the energy source for the reaction. The sequence is that of DNA ligase B from Salmonella dublin (strain CT_02021853).